We begin with the raw amino-acid sequence, 587 residues long: Aspartate--tRNA ligase (587 aa).

An L-aspartate-binding site is contributed by Glu-174. The tract at residues 198 to 201 (QITK) is aspartate. Arg-220 serves as a coordination point for L-aspartate. Residues 220–222 (RDE) and Gln-229 each bind ATP. Position 443 (His-443) interacts with L-aspartate. Glu-477 contacts ATP. Residue Arg-484 participates in L-aspartate binding. 529-532 (GLDR) is an ATP binding site.

This sequence belongs to the class-II aminoacyl-tRNA synthetase family. Type 1 subfamily. As to quaternary structure, homodimer.

The protein localises to the cytoplasm. The catalysed reaction is tRNA(Asp) + L-aspartate + ATP = L-aspartyl-tRNA(Asp) + AMP + diphosphate. In terms of biological role, catalyzes the attachment of L-aspartate to tRNA(Asp) in a two-step reaction: L-aspartate is first activated by ATP to form Asp-AMP and then transferred to the acceptor end of tRNA(Asp). The chain is Aspartate--tRNA ligase from Streptococcus pneumoniae (strain 70585).